The following is a 133-amino-acid chain: Large ribosomal subunit protein uL14 (133 aa).

Belongs to the universal ribosomal protein uL14 family. In terms of assembly, part of the 50S ribosomal subunit. Forms a cluster with proteins L3 and L19. In the 70S ribosome, L14 and L19 interact and together make contacts with the 16S rRNA in bridges B5 and B8.

Functionally, binds to 23S rRNA. Forms part of two intersubunit bridges in the 70S ribosome. The protein is Large ribosomal subunit protein uL14 of Gloeobacter violaceus (strain ATCC 29082 / PCC 7421).